The primary structure comprises 359 residues: Nicotinate-nucleotide--dimethylbenzimidazole phosphoribosyltransferase (359 aa).

Residue glutamate 318 is the Proton acceptor of the active site.

The protein belongs to the CobT family. In terms of assembly, homodimer.

It carries out the reaction 5,6-dimethylbenzimidazole + nicotinate beta-D-ribonucleotide = alpha-ribazole 5'-phosphate + nicotinate + H(+). Its pathway is nucleoside biosynthesis; alpha-ribazole biosynthesis; alpha-ribazole from 5,6-dimethylbenzimidazole: step 1/2. Catalyzes the synthesis of alpha-ribazole-5'-phosphate from nicotinate mononucleotide (NAMN) and 5,6-dimethylbenzimidazole (DMB). In Escherichia coli O157:H7, this protein is Nicotinate-nucleotide--dimethylbenzimidazole phosphoribosyltransferase.